Reading from the N-terminus, the 343-residue chain is Leucine-rich repeat-containing protein 23 (343 aa).

The span at 1–30 (MSDEDDLEDSEPDQDDSEKEEDEKETEEGE) shows a compositional bias: acidic residues. The disordered stretch occupies residues 1-47 (MSDEDDLEDSEPDQDDSEKEEDEKETEEGEDYRKEGEEFPEEWLPTP). 8 LRR repeats span residues 92-113 (HLRY…NYLT), 114-134 (HLLW…NELP), 135-155 (YLQI…ISHP), 156-177 (RLET…DPEK), 180-200 (SLHT…INLP), 201-222 (KLKN…EDLS), 223-244 (NLTT…SREM), and 246-267 (SLQY…AKLR). Residues 208–343 (AQNMLKKVEG…RDLEPEQSLI (136 aa)) are interaction with RSPH9. Residues 280–318 (NPCTDETSYRQEALVQMPYLERLDKEFYEEEERAEADVI) form the LRRCT domain. The stretch at 307–329 (YEEEERAEADVIRQRLKEEKEQE) forms a coiled coil. Residues 318–337 (IRQRLKEEKEQEPEPQRDLE) show a composition bias toward basic and acidic residues. Positions 318–343 (IRQRLKEEKEQEPEPQRDLEPEQSLI) are disordered.

As to quaternary structure, component of the axonemal radial spoke complex. Interacts with RSPH3. Interacts with RSPH9. In terms of tissue distribution, expressed in spermatozoa.

The protein resides in the cell projection. Its subcellular location is the cilium. It is found in the flagellum. It localises to the cytoplasm. The protein localises to the cytoskeleton. The protein resides in the flagellum axoneme. Its function is as follows. Essential for sperm motility and male fertility. Plays an important role in the proper assembly of the third radial spoke (RS3) head and the bridge structure between RS2 and RS3 in the sperm flagella. This is Leucine-rich repeat-containing protein 23 (LRRC23) from Homo sapiens (Human).